Here is a 59-residue protein sequence, read N- to C-terminus: Bdellastasin (59 aa).

Intrachain disulfides connect Cys-10-Cys-21, Cys-15-Cys-26, Cys-28-Cys-48, Cys-33-Cys-52, and Cys-37-Cys-54. In terms of domain architecture, Antistasin-like spans 28–54; that stretch reads CSDLHCKVKCEHGFKKDDNGCEYACIC.

The protein resides in the secreted. Functionally, strong inhibitor of mammalian trypsin, plasmin and acrosin. This is Bdellastasin from Hirudo medicinalis (Medicinal leech).